A 267-amino-acid polypeptide reads, in one-letter code: 4-hydroxy-tetrahydrodipicolinate reductase (267 aa).

8 to 13 (GANGRM) contacts NAD(+). NADP(+) is bound at residue Arg-35. NAD(+)-binding positions include 98-100 (GTT) and 122-125 (AANY). His-155 acts as the Proton donor/acceptor in catalysis. His-156 is a (S)-2,3,4,5-tetrahydrodipicolinate binding site. The Proton donor role is filled by Lys-159. 165-166 (GT) contributes to the (S)-2,3,4,5-tetrahydrodipicolinate binding site.

This sequence belongs to the DapB family.

Its subcellular location is the cytoplasm. It carries out the reaction (S)-2,3,4,5-tetrahydrodipicolinate + NAD(+) + H2O = (2S,4S)-4-hydroxy-2,3,4,5-tetrahydrodipicolinate + NADH + H(+). The catalysed reaction is (S)-2,3,4,5-tetrahydrodipicolinate + NADP(+) + H2O = (2S,4S)-4-hydroxy-2,3,4,5-tetrahydrodipicolinate + NADPH + H(+). Its pathway is amino-acid biosynthesis; L-lysine biosynthesis via DAP pathway; (S)-tetrahydrodipicolinate from L-aspartate: step 4/4. Functionally, catalyzes the conversion of 4-hydroxy-tetrahydrodipicolinate (HTPA) to tetrahydrodipicolinate. The polypeptide is 4-hydroxy-tetrahydrodipicolinate reductase (Pseudoalteromonas atlantica (strain T6c / ATCC BAA-1087)).